We begin with the raw amino-acid sequence, 634 residues long: Ankyrin repeat and SOCS box protein 2 (634 aa).

Positions 26–45 constitute a UIM domain; that stretch reads SEEELLQMAIEQSLADKTRG. Residues 36–82 form a disordered region; it reads EQSLADKTRGPTPAEASASSQTNHQPGHFHPWTRSPSSPENPPARAP. ANK repeat units lie at residues 104–133, 137–167, 171–200, 204–233, 237–266, 270–299, 303–332, 336–365, 368–397, 410–439, 440–469, and 476–504; these read AAMDPVLKAIKEGDEEALKIMIQDGKNLAE, EGWLPLHEAAYYGQLGCLKVLQQAYPGTIDQ, QEETALYLATCREHLDCLLSLLQAGAEPDI, SRETPLYKACERKNAEAVRILVRYNADANH, RGWTALHESVSRNDLEVMEILVSGGAKVEA, YSITPLFVAAQSGQLEALRFLAKHGADINT, DSASALYEASKNEHEDVVEFLLSQGADANK, DGLLPLHVASKKGNYRIVQMLLPVTSRTRV, SGISPLHLAAERNHDAVLEALLAARFDVNA, RRSSALYFAVVNNNVYATELLLLAGADPNR, DVISPLLVAIRHGCLRTMQLLLDHGANIDA, and TAFPATIMFAMKCLSLLKFLMDLGCDGEP. Serine 371 is subject to Phosphoserine. Residues 580–634 enclose the SOCS box domain; it reads EDWAVIKEKAEPPRPLAHLCRLRVRKAIGKYRIKLLDTLPLPGRLIRYLKYENTQ.

Belongs to the ankyrin SOCS box (ASB) family. Component of a probable ECS E3 ubiquitin-protein ligase complex which contains CUL5, either RBX1 or RNF7/RBX2, Elongin BC complex (ELOB and ELOC) and ASB2. Interacts with SKP2. Through its interaction with SKP2, likely to bridge the formation of dimeric E3-ubiquitin-protein ligase complexes composed of an ECS complex and an SCF(SKP2) complex. Interacts with JAK2; the interaction targets JAK2 for Notch-mediated proteasomal degradation. Interacts with TCF3/E2A; the interaction is mediated by SKP2 and targets TCF3 for Notch-mediated proteasomal degradation. As to quaternary structure, interacts with DES. In terms of processing, monoubiquitinated. Not monoubiquitinated. Post-translationally, phosphorylation at Ser-371 is required for association with FLNA and subsequent FLNA degradation. Highest expression in muscle, heart and spleen. Highly expressed in cells of the first and second heart fields in the developing embryonic heart. At 9.5 dpc, robust expression predominantly in the left and right ventricles (RV) and to a lower extent in inflow and outflow tracts. At 10.5 and 11.5 dpc, expression is restricted to the myocardium with no expression observed in the endocardium. As to expression, not expressed in immature dendritic cells. Highly expressed in adult skeletal muscle with very low levels in adult bone marrow. In terms of tissue distribution, expressed in immature dendritic cells and in primary dendritic cells derived from the spleen. Highly expressed in adult bone marrow with negligible levels in adult skeletal muscle. Expressed at higher levels in T helper type 2 (Th2) cells than in regulatory T (Treg) cells, type 1 helper T (Th1) cells and T helper 17 (Th17) cells.

The protein localises to the cytoplasm. It localises to the cytoskeleton. It is found in the stress fiber. The protein resides in the myofibril. Its subcellular location is the sarcomere. The protein localises to the z line. It functions in the pathway protein modification; protein ubiquitination. In terms of biological role, substrate-recognition component of a SCF-like ECS (Elongin-Cullin-SOCS-box protein) E3 ubiquitin-protein ligase complex which mediates the ubiquitination and subsequent proteasomal degradation of target proteins. Mediates Notch-induced ubiquitination and degradation of substrates including TCF3/E2A and JAK2. Required during embryonic heart development for complete heart looping. Required for cardiomyocyte differentiation. Specifically promotes the ubiquitination of SMAD9 and targets it for proteasomal degradation, leading to avoid excessive accumulation of SMAD9. Plays a role in the regulation of NK-cell migration by modulating protein levels of filamin A/FLNA via regulation of its ubiquitination and proteasome degradation. Its function is as follows. Involved in myogenic differentiation and targets filamin FLNB for proteasomal degradation but not filamin FLNA. Also targets DES for proteasomal degradation. Acts as a negative regulator of skeletal muscle mass. Targets filamins FLNA and FLNB for proteasomal degradation. This leads to enhanced adhesion of hematopoietic cells to fibronectin. Required for FLNA degradation in immature cardiomyocytes which is necessary for actin cytoskeleton remodeling, leading to proper organization of myofibrils and function of mature cardiomyocytes. Required for degradation of FLNA and FLNB in immature dendritic cells (DC) which enhances immature DC migration by promoting DC podosome formation and DC-mediated degradation of the extracellular matrix. Does not promote proteasomal degradation of tyrosine-protein kinases JAK1 or JAK2 in hematopoietic cells. The sequence is that of Ankyrin repeat and SOCS box protein 2 from Mus musculus (Mouse).